A 224-amino-acid chain; its full sequence is Small ribosomal subunit protein uS3 (224 aa).

Residues 38-106 enclose the KH type-2 domain; the sequence is LREFVKEKLG…EVYLNVVEVR (69 aa).

Belongs to the universal ribosomal protein uS3 family. In terms of assembly, part of the 30S ribosomal subunit. Forms a tight complex with proteins S10 and S14.

Binds the lower part of the 30S subunit head. Binds mRNA in the 70S ribosome, positioning it for translation. In Anaeromyxobacter dehalogenans (strain 2CP-C), this protein is Small ribosomal subunit protein uS3.